A 171-amino-acid polypeptide reads, in one-letter code: Adenine phosphoribosyltransferase (171 aa).

The protein belongs to the purine/pyrimidine phosphoribosyltransferase family. As to quaternary structure, homodimer.

It localises to the cytoplasm. The catalysed reaction is AMP + diphosphate = 5-phospho-alpha-D-ribose 1-diphosphate + adenine. It participates in purine metabolism; AMP biosynthesis via salvage pathway; AMP from adenine: step 1/1. In terms of biological role, catalyzes a salvage reaction resulting in the formation of AMP, that is energically less costly than de novo synthesis. The protein is Adenine phosphoribosyltransferase of Solidesulfovibrio magneticus (strain ATCC 700980 / DSM 13731 / RS-1) (Desulfovibrio magneticus).